The sequence spans 347 residues: GMP reductase (347 aa).

Residue 108 to 131 participates in NADP(+) binding; the sequence is ADFEKTQQILSQNPQLNFVCIDVA. The K(+) site is built by G181 and G183. Catalysis depends on C186, which acts as the Thioimidate intermediate. 216-239 lines the NADP(+) pocket; the sequence is IISDGGCTMPGDVAKAFGGGADFV.

Belongs to the IMPDH/GMPR family. GuaC type 1 subfamily. Homotetramer.

It catalyses the reaction IMP + NH4(+) + NADP(+) = GMP + NADPH + 2 H(+). Its function is as follows. Catalyzes the irreversible NADPH-dependent deamination of GMP to IMP. It functions in the conversion of nucleobase, nucleoside and nucleotide derivatives of G to A nucleotides, and in maintaining the intracellular balance of A and G nucleotides. The protein is GMP reductase of Klebsiella pneumoniae subsp. pneumoniae (strain ATCC 700721 / MGH 78578).